Here is a 265-residue protein sequence, read N- to C-terminus: Mlc titration factor A (265 aa).

Zn(2+)-binding residues include histidine 111, histidine 148, histidine 152, and glutamate 211.

It belongs to the MtfA family. As to quaternary structure, interacts with Mlc. Zn(2+) is required as a cofactor.

Its subcellular location is the cytoplasm. In terms of biological role, involved in the modulation of the activity of the glucose-phosphotransferase system (glucose-PTS). Interacts with the transcriptional repressor Mlc, preventing its interaction with DNA and leading to the modulation of expression of genes regulated by Mlc, including ptsG, which encodes the PTS system glucose-specific EIICB component. Shows zinc-dependent metallopeptidase activity. This Klebsiella pneumoniae (strain 342) protein is Mlc titration factor A.